Consider the following 371-residue polypeptide: Nuclear hormone receptor family member nhr-51 (371 aa).

The segment at residues 2–77 (NKNCLICHRK…MGMQAFPRRV (76 aa)) is a DNA-binding region (nuclear receptor). NR C4-type zinc fingers lie at residues 5-25 (CLICHRKAAGQHYGVLSCFAC) and 41-60 (CQKFNKCYEKFIILPKCKAC). The NR LBD domain maps to 98–337 (MDEQRHWRML…KQLVTDTFVD (240 aa)).

Belongs to the nuclear hormone receptor family.

The protein resides in the nucleus. Functionally, orphan nuclear receptor. The polypeptide is Nuclear hormone receptor family member nhr-51 (nhr-51) (Caenorhabditis elegans).